The chain runs to 32 residues: MTIISDSQIVVALISALVTGILALRLGRELYR.

A helical membrane pass occupies residues 10-27 (VVALISALVTGILALRLG).

It belongs to the PsaM family.

The protein resides in the plastid. The protein localises to the chloroplast thylakoid membrane. The protein is Photosystem I reaction center subunit XII of Zygnema circumcarinatum (Green alga).